The following is a 796-amino-acid chain: Probable phosphoketolase (796 aa).

The protein belongs to the XFP family. Requires thiamine diphosphate as cofactor.

This is Probable phosphoketolase from Clostridium acetobutylicum (strain ATCC 824 / DSM 792 / JCM 1419 / IAM 19013 / LMG 5710 / NBRC 13948 / NRRL B-527 / VKM B-1787 / 2291 / W).